The primary structure comprises 344 residues: Heat-inducible transcription repressor HrcA (344 aa).

It belongs to the HrcA family.

Its function is as follows. Negative regulator of class I heat shock genes (grpE-dnaK-dnaJ and groELS operons). Prevents heat-shock induction of these operons. The polypeptide is Heat-inducible transcription repressor HrcA (Geobacillus kaustophilus (strain HTA426)).